Consider the following 1174-residue polypeptide: Ankyrin repeat and LEM domain-containing protein 2 homolog (1174 aa).

Low complexity-rich tracts occupy residues 37–56 (NPAS…SAAS), 150–164 (SSPT…SSPT), 174–198 (LGSN…SSSN), and 205–219 (QQQM…PQQP). 2 disordered regions span residues 37 to 74 (NPAS…YEDP) and 141 to 230 (PIIS…PFRA). The stretch at 338 to 367 (RGETPLHFAAKNGHVAMVEVLVSYPECKSL) is one ANK repeat. Disordered stretches follow at residues 519-543 (AEAT…HNNN) and 961-981 (GSSS…SPGI). The span at 521-532 (ATSSPKPTKNVP) shows a compositional bias: polar residues. Residues 533 to 543 (NGTNECEHNNN) are compositionally biased toward low complexity.

Belongs to the ANKLE2 family.

It is found in the endoplasmic reticulum. It localises to the nucleus envelope. Its subcellular location is the cytoplasm. Its function is as follows. Involved in brain development probably by regulating asymmetric division of neuroblasts. Regulates neuroblast asymmetric cell division by controlling asymmetric protein localization of Mira, Baz, Par-6 and aPKC, and spindle alignment. Also, regulates the localization of kinase Ball during mitosis, specifically maintaining Ball in the nucleus during interphase. Required for proper ER and nuclear envelope morphology in neuroblasts. The sequence is that of Ankyrin repeat and LEM domain-containing protein 2 homolog from Drosophila melanogaster (Fruit fly).